The following is a 224-amino-acid chain: 7-cyano-7-deazaguanine synthase (224 aa).

Residue 9 to 19 (ISGGMDSTLCA) participates in ATP binding. Zn(2+) contacts are provided by Cys-190, Cys-198, Cys-201, and Cys-204.

This sequence belongs to the QueC family. It depends on Zn(2+) as a cofactor.

It catalyses the reaction 7-carboxy-7-deazaguanine + NH4(+) + ATP = 7-cyano-7-deazaguanine + ADP + phosphate + H2O + H(+). It participates in purine metabolism; 7-cyano-7-deazaguanine biosynthesis. Functionally, catalyzes the ATP-dependent conversion of 7-carboxy-7-deazaguanine (CDG) to 7-cyano-7-deazaguanine (preQ(0)). This is 7-cyano-7-deazaguanine synthase from Campylobacter jejuni subsp. doylei (strain ATCC BAA-1458 / RM4099 / 269.97).